A 111-amino-acid chain; its full sequence is MIGQRIKQYRKEKGYSLSELAEKAGVAKSYLSSIERNLQTNPSIQFLEKVSAVLDVSVHTLLNEKDETEYDGQLDSEWENLVRDAMASGVSKKQFREFLDYQKWKKRQEKE.

One can recognise an HTH cro/C1-type domain in the interval 6–61 (IKQYRKEKGYSLSELAEKAGVAKSYLSSIERNLQTNPSIQFLEKVSAVLDVSVHTL). Positions 17–36 (LSELAEKAGVAKSYLSSIER) form a DNA-binding region, H-T-H motif. The Sin domain occupies 65 to 103 (KDETEYDGQLDSEWENLVRDAMASGVSKKQFREFLDYQK).

In terms of assembly, homotetramer. Also associates with SinI.

Functionally, affects autolysin level and flagellation. This is HTH-type transcriptional regulator SinR (sinR) from Bacillus licheniformis.